A 103-amino-acid polypeptide reads, in one-letter code: Iron-sulfur cluster assembly protein CyaY (103 aa).

Belongs to the frataxin family.

Involved in iron-sulfur (Fe-S) cluster assembly. May act as a regulator of Fe-S biogenesis. The sequence is that of Iron-sulfur cluster assembly protein CyaY from Rickettsia africae (strain ESF-5).